The following is a 418-amino-acid chain: Adenylosuccinate synthetase 2 (418 aa).

GTP is bound by residues 12–18 (GDEGKGR) and 40–42 (GHT). The Proton acceptor role is filled by Asp-13. 2 residues coordinate Mg(2+): Asp-13 and Gly-40. IMP contacts are provided by residues 13–16 (DEGK), 38–41 (NAGH), Thr-127, Lys-141, Thr-239, and Arg-301. Catalysis depends on His-41, which acts as the Proton donor. Residue 297–303 (AVTGRPR) coordinates substrate. GTP is bound by residues Arg-303, 329–331 (KID), and 407–409 (SVG).

Belongs to the adenylosuccinate synthetase family. In terms of assembly, homodimer. It depends on Mg(2+) as a cofactor.

It localises to the cytoplasm. The catalysed reaction is IMP + L-aspartate + GTP = N(6)-(1,2-dicarboxyethyl)-AMP + GDP + phosphate + 2 H(+). It functions in the pathway purine metabolism; AMP biosynthesis via de novo pathway; AMP from IMP: step 1/2. Plays an important role in the de novo pathway of purine nucleotide biosynthesis. Catalyzes the first committed step in the biosynthesis of AMP from IMP. In Pseudoalteromonas translucida (strain TAC 125), this protein is Adenylosuccinate synthetase 2.